The primary structure comprises 382 residues: Putative glutamate--cysteine ligase 2-1 (382 aa).

Belongs to the glutamate--cysteine ligase type 2 family. YbdK subfamily.

It carries out the reaction L-cysteine + L-glutamate + ATP = gamma-L-glutamyl-L-cysteine + ADP + phosphate + H(+). Functionally, ATP-dependent carboxylate-amine ligase which exhibits weak glutamate--cysteine ligase activity. The sequence is that of Putative glutamate--cysteine ligase 2-1 from Nocardioides sp. (strain ATCC BAA-499 / JS614).